A 174-amino-acid polypeptide reads, in one-letter code: Large ribosomal subunit protein uL6 (174 aa).

It belongs to the universal ribosomal protein uL6 family. As to quaternary structure, part of the 50S ribosomal subunit.

In terms of biological role, this protein binds to the 23S rRNA, and is important in its secondary structure. It is located near the subunit interface in the base of the L7/L12 stalk, and near the tRNA binding site of the peptidyltransferase center. This is Large ribosomal subunit protein uL6 from Stenotrophomonas maltophilia (strain R551-3).